The following is a 274-amino-acid chain: Peroxiredoxin-4 (274 aa).

Residues 1–40 form the signal peptide; that stretch reads MEAPPPPPPLPATTLAPGRSRKLLLLPLLLFLLRAEAVRG. The Thioredoxin domain occupies 82 to 240; the sequence is AKISKPAPYW…TLRLVQAFQY (159 aa). Residue Cys127 is the Cysteine sulfenic acid (-SOH) intermediate of the active site.

It belongs to the peroxiredoxin family. AhpC/Prx1 subfamily. As to quaternary structure, homodimer; disulfide-linked, upon oxidation. 5 homodimers assemble to form a ring-like decamer. Post-translationally, the enzyme can be inactivated by further oxidation of the cysteine sulfenic acid (C(P)-SOH) to sulphinic acid (C(P)-SO2H) and sulphonic acid (C(P)-SO3H) instead of its condensation to a disulfide bond.

It is found in the cytoplasm. The protein resides in the endoplasmic reticulum. The enzyme catalyses a hydroperoxide + [thioredoxin]-dithiol = an alcohol + [thioredoxin]-disulfide + H2O. In terms of biological role, thiol-specific peroxidase that catalyzes the reduction of hydrogen peroxide and organic hydroperoxides to water and alcohols, respectively. Plays a role in cell protection against oxidative stress by detoxifying peroxides and as sensor of hydrogen peroxide-mediated signaling events. Regulates the activation of NF-kappa-B in the cytosol by a modulation of I-kappa-B-alpha phosphorylation. This chain is Peroxiredoxin-4 (PRDX4), found in Bos taurus (Bovine).